The sequence spans 414 residues: Voltage-gated ClC-type chloride channel ClcB (414 aa).

The next 11 membrane-spanning stretches (helical) occupy residues 5–25, 54–74, 116–136, 147–167, 169–189, 220–240, 255–275, 292–312, 327–347, 353–373, and 381–401; these read LVIS…FHQA, ALTP…YQRY, SAIG…SVFA, LWVA…PLAG, LFIA…PVVI, VQYF…PLFL, LLPP…SLIF, TPPG…AVLA, LFVG…WPVL, LLMA…APIM, and MTGE…ATTI.

The protein belongs to the chloride channel (TC 2.A.49) family. ClcB subfamily.

The protein resides in the cell inner membrane. Probably acts as an electrical shunt for an outwardly-directed proton pump that is linked to amino acid decarboxylation, as part of the extreme acid resistance (XAR) response. This Yersinia pestis protein is Voltage-gated ClC-type chloride channel ClcB.